Consider the following 443-residue polypeptide: Ribulose bisphosphate carboxylase large chain (443 aa).

Position 7 is an N6,N6,N6-trimethyllysine (Lys7). Substrate is bound by residues Asn116 and Thr166. Lys168 (proton acceptor) is an active-site residue. Substrate is bound at residue Lys170. The Mg(2+) site is built by Lys194, Asp196, and Glu197. Lys194 bears the N6-carboxylysine mark. The active-site Proton acceptor is His287. 3 residues coordinate substrate: Arg288, His320, and Ser372.

The protein belongs to the RuBisCO large chain family. Type I subfamily. In terms of assembly, heterohexadecamer of 8 large chains and 8 small chains; disulfide-linked. The disulfide link is formed within the large subunit homodimers. Requires Mg(2+) as cofactor. The disulfide bond which can form in the large chain dimeric partners within the hexadecamer appears to be associated with oxidative stress and protein turnover.

Its subcellular location is the plastid. The protein localises to the chloroplast. The catalysed reaction is 2 (2R)-3-phosphoglycerate + 2 H(+) = D-ribulose 1,5-bisphosphate + CO2 + H2O. It catalyses the reaction D-ribulose 1,5-bisphosphate + O2 = 2-phosphoglycolate + (2R)-3-phosphoglycerate + 2 H(+). RuBisCO catalyzes two reactions: the carboxylation of D-ribulose 1,5-bisphosphate, the primary event in carbon dioxide fixation, as well as the oxidative fragmentation of the pentose substrate in the photorespiration process. Both reactions occur simultaneously and in competition at the same active site. This Abies homolepis (Nikko fir) protein is Ribulose bisphosphate carboxylase large chain.